The sequence spans 408 residues: MQVEILATGDELLTGQVVDTNSPWLMDRLWDLGLMVRRKTLVADDRDDLRAAILETTGRADLVVMSGGMGPTEDDLTSECVAAVLGVPLERHEPSIELLRERFRKFGRTLTPNNEKQAWFPRGAEVIPNRWGSAPGFTVQVGRGRVVCLPGVPVEYRGLCDEWVLPHVRARLGEVPAAGLVKLFAVPESHADHAMRPVMDDAANAGVRFGYRAHWPEVHVKWTVPGPDAAARAARIRERVLGIFGEQVFGEGKDELPDLVVARLAARGERVALGESCTGGMVAELLTSVAGASAVLDLGVVAYANAAKEQVLGVPAALLAAHGAVSEPVARALAEGARRTAGAAWGVGITGIAGPSGGTPEKPVGTVHLAVAGPSGTEAVARAYRGDRDRVRRQAAYEALNLLRLALR.

Belongs to the CinA family.

The protein is CinA-like protein of Anaeromyxobacter dehalogenans (strain 2CP-C).